Reading from the N-terminus, the 141-residue chain is Cholinesterase (141 aa).

The N-linked (GlcNAc...) asparagine glycan is linked to Asn-39. 49–50 (GS) is a binding site for substrate. The Acyl-ester intermediate role is filled by Ser-131. A Phosphoserine modification is found at Ser-131.

This sequence belongs to the type-B carboxylesterase/lipase family. In terms of assembly, homotetramer; disulfide-linked. Dimer of dimers. In terms of tissue distribution, present in most cells except erythrocytes.

It is found in the secreted. It catalyses the reaction an acylcholine + H2O = a carboxylate + choline + H(+). Functionally, esterase with broad substrate specificity. Contributes to the inactivation of the neurotransmitter acetylcholine. Can degrade neurotoxic organophosphate esters. In Ovis aries (Sheep), this protein is Cholinesterase (BCHE).